A 621-amino-acid polypeptide reads, in one-letter code: MSNQEYTFQTEINQLLDLMIHSLYSNKEIFLRELISNASDALDKLNYLMLTDEKLKGLNITPSIHLSFDSQKKTLTIKDNGIGMDKNDLIEHLGTIAKSGTKSFLSALSGDKKKDSALIGQFGVGFYSAFMVASKIVVQTKKVTNHQAYAWVSDGKGKFEISECVKEEQGTEITLFLKEEDSHFASRWEIDGIVKKYSEHIPFPIFLTYTDTKFEGEGDHKKEVKEEKCDQINQASALWKMNKSELKDKDYKDFYQSFAHDNSEPLSYIHNKVEGSLEYTTLFYIPSKAPFDMFRVDYKSGVKLYVKRVFITDDDKELLPSYLRFVKGVIDSEDLPLNVSREILQQNKILANIRSASVKKILSEIERLSKDEKNYHKFYEPFGKVLKEGLYGDFENKEKLLELLRFYSKDKEKLISLKEYRENLKENQKSIYYLLGENLDLLKASPLLEKYAQKGYDVLLLSDEIDAFVMPGVNEYDKTPFRDASHSESLKELGLEEINDEVKDQFKDLMKAFEENLKDEIKGVELSSHLTSAVALIGDEQNAMMANFMRQMGQSVPESKKTLELNPNHAILQKLLKCEDKEQLSAFIWLLYDGAKLLEKGALKDAKSFNERLNSVLLKAL.

An a; substrate-binding region spans residues 1 to 341 (MSNQEYTFQT…SEDLPLNVSR (341 aa)). The b stretch occupies residues 342–547 (EILQQNKILA…GDEQNAMMAN (206 aa)). Residues 548-621 (FMRQMGQSVP…RLNSVLLKAL (74 aa)) are c.

The protein belongs to the heat shock protein 90 family. In terms of assembly, homodimer.

It localises to the cytoplasm. In terms of biological role, molecular chaperone. Has ATPase activity. This chain is Chaperone protein HtpG, found in Helicobacter pylori (strain HPAG1).